Here is a 906-residue protein sequence, read N- to C-terminus: Alanine--tRNA ligase (906 aa).

Residues His-600, His-604, Cys-703, and His-707 each contribute to the Zn(2+) site.

It belongs to the class-II aminoacyl-tRNA synthetase family. Homodimer. The cofactor is Zn(2+).

Its subcellular location is the cytoplasm. It carries out the reaction tRNA(Ala) + L-alanine + ATP = L-alanyl-tRNA(Ala) + AMP + diphosphate. Functionally, catalyzes the attachment of alanine to tRNA(Ala) in a two-step reaction: alanine is first activated by ATP to form Ala-AMP and then transferred to the acceptor end of tRNA(Ala). Incorrectly charged aminoacyl-tRNA(Ala) is also edited in situ by the editing domain. In Archaeoglobus fulgidus (strain ATCC 49558 / DSM 4304 / JCM 9628 / NBRC 100126 / VC-16), this protein is Alanine--tRNA ligase (alaS).